Reading from the N-terminus, the 285-residue chain is 4-diphosphocytidyl-2-C-methyl-D-erythritol kinase (285 aa).

The active site involves K10. 93-103 (PIGGGLGGGSS) is a binding site for ATP. D135 is an active-site residue.

It belongs to the GHMP kinase family. IspE subfamily.

It catalyses the reaction 4-CDP-2-C-methyl-D-erythritol + ATP = 4-CDP-2-C-methyl-D-erythritol 2-phosphate + ADP + H(+). It participates in isoprenoid biosynthesis; isopentenyl diphosphate biosynthesis via DXP pathway; isopentenyl diphosphate from 1-deoxy-D-xylulose 5-phosphate: step 3/6. In terms of biological role, catalyzes the phosphorylation of the position 2 hydroxy group of 4-diphosphocytidyl-2C-methyl-D-erythritol. This is 4-diphosphocytidyl-2-C-methyl-D-erythritol kinase from Vesicomyosocius okutanii subsp. Calyptogena okutanii (strain HA).